The primary structure comprises 283 residues: 9,11-endoperoxide prostaglandin H2 reductase (283 aa).

NADP(+) contacts are provided by residues valine 23 to tryptophan 24 and aspartate 48. Tyrosine 53 acts as the Proton donor in catalysis. Histidine 111 serves as a coordination point for substrate. NADP(+) contacts are provided by residues serine 140 to asparagine 141, glutamine 162, tryptophan 188 to serine 193, lysine 234 to threonine 236, and arginine 240 to asparagine 244. Residues asparagine 264 to alanine 283 are disordered.

Belongs to the aldo/keto reductase family. In terms of assembly, monomer.

It is found in the cytoplasm. The catalysed reaction is prostaglandin F2alpha + NADP(+) = prostaglandin H2 + NADPH + H(+). The protein operates within lipid metabolism; prostaglandin biosynthesis. Catalyzes the NADP-dependent formation of prostaglandin F2-alpha from prostaglandin H2. Also has aldo/ketoreductase activity towards the synthetic substrates 9,10-phenanthrenequinone and p-nitrobenzaldehyde. This Trypanosoma cruzi (strain CL Brener) protein is 9,11-endoperoxide prostaglandin H2 reductase.